We begin with the raw amino-acid sequence, 272 residues long: Aquaporin-11 (272 aa).

Over 1 to 14 (MTALRALWSEMQDT) the chain is Cytoplasmic. Residues 15 to 35 (CTSLGLMLSVVLLAGLARVVA) form a helical membrane-spanning segment. Topologically, residues 36-47 (RQQQLHRPMAHA) are lumenal. The helical transmembrane segment at 48–68 (FVLEFLATLQLCCCTHELLLL) threads the bilayer. The Cytoplasmic segment spans residues 69–75 (SEQEPAH). A helical membrane pass occupies residues 76–96 (PTWPLTLIYFFTLVHGLTLVG). The Lumenal portion of the chain corresponds to 97–167 (TSSNPCGVMM…NPIQVDLPKA (71 aa)). Positions 100–102 (NPC) match the NPC motif. A helical membrane pass occupies residues 168–188 (VIVEALCSFIFHSALLNFQEV). The Cytoplasmic segment spans residues 189 to 195 (RPKLRIH). The chain crosses the membrane as a helical span at residues 196-216 (LLAALITFLVYAGGSLTGAVF). The NPA signature appears at 217-219 (NPA). The Lumenal segment spans residues 217 to 235 (NPALALSLHFKCFDEAFLQ). Residues 236 to 256 (FFIVYWLAPSLGILLMILMFS) traverse the membrane as a helical segment. Over 257 to 272 (FFLPWLYNNHTINKKE) the chain is Cytoplasmic.

Belongs to the MIP/aquaporin (TC 1.A.8) family. AQP11/AQP12 subfamily. As to quaternary structure, homodimer; disulfide-linked. Homotetramer. Can also form homomultimer. Not glycosylated. As to expression, expressed in retina specifically at retinal Mueller glial cells.

The protein localises to the endoplasmic reticulum membrane. It is found in the cytoplasmic vesicle membrane. It localises to the cell membrane. The catalysed reaction is H2O(in) = H2O(out). It carries out the reaction glycerol(in) = glycerol(out). It catalyses the reaction H2O2(out) = H2O2(in). Its function is as follows. Channel protein that facilitates the transport of water, glycerol and hydrogen peroxide across membrane of cell or organelles guaranteeing intracellular homeostasis in several organes like liver, kidney and brain. In situation of stress, participates in endoplasmic reticulum (ER) homeostasis by regulating redox homeostasis through the transport of hydrogen peroxide across the endoplasmic reticulum membrane thereby regulating the oxidative stress through the NADPH oxidase 2 pathway. Plays a role by maintaining an environment suitable for translation or protein foldings in the ER lumen namely by participating in the PKD1 glycosylation processing resulting in regulation of PKD1 membrane trafficking thereby preventing the accumulation of unfolding protein in ER. Plays a role in the proximal tubule function by regulating its endosomal acidification. May play a role in postnatal kidney development. The chain is Aquaporin-11 from Equus caballus (Horse).